Here is an 81-residue protein sequence, read N- to C-terminus: U1-sicaritoxin-Li1c (81 aa).

The propeptide occupies 1–16 (ARGDAEKWESLISEER). 4 cysteine pairs are disulfide-bonded: C18-C35, C26-C40, C34-C53, and C42-C51. R62 carries the post-translational modification Arginine amide. A propeptide spanning residues 66 to 81 (ALMLDPETHRLLFSED) is cleaved from the precursor.

The protein belongs to the neurotoxin 28 (Litx) family. In terms of tissue distribution, expressed by the venom gland.

The protein resides in the secreted. In terms of biological role, toxin active against insects (S.frugiperda larvae). May act on sodium (Nav) or calcium (Cav) channels. This is U1-sicaritoxin-Li1c from Loxosceles intermedia (Brown spider).